The following is a 392-amino-acid chain: Succinate--CoA ligase [ADP-forming] subunit beta (392 aa).

One can recognise an ATP-grasp domain in the interval 9–236; sequence RDLFERHGLP…QAAVDPLEQA (228 aa). Residues K45, 52–54, A94, and E99 each bind ATP; that span reads GRG. N191 and D205 together coordinate Mg(2+). Residues N256 and 318 to 320 contribute to the substrate site; that span reads GIT.

This sequence belongs to the succinate/malate CoA ligase beta subunit family. Heterotetramer of two alpha and two beta subunits. Mg(2+) serves as cofactor.

The catalysed reaction is succinate + ATP + CoA = succinyl-CoA + ADP + phosphate. It catalyses the reaction GTP + succinate + CoA = succinyl-CoA + GDP + phosphate. Its pathway is carbohydrate metabolism; tricarboxylic acid cycle; succinate from succinyl-CoA (ligase route): step 1/1. Its function is as follows. Succinyl-CoA synthetase functions in the citric acid cycle (TCA), coupling the hydrolysis of succinyl-CoA to the synthesis of either ATP or GTP and thus represents the only step of substrate-level phosphorylation in the TCA. The beta subunit provides nucleotide specificity of the enzyme and binds the substrate succinate, while the binding sites for coenzyme A and phosphate are found in the alpha subunit. The polypeptide is Succinate--CoA ligase [ADP-forming] subunit beta (Salinispora tropica (strain ATCC BAA-916 / DSM 44818 / JCM 13857 / NBRC 105044 / CNB-440)).